Here is a 344-residue protein sequence, read N- to C-terminus: Tetraacyldisaccharide 4'-kinase (344 aa).

68-75 (TAGGNGKT) serves as a coordination point for ATP.

This sequence belongs to the LpxK family.

The enzyme catalyses a lipid A disaccharide + ATP = a lipid IVA + ADP + H(+). The protein operates within glycolipid biosynthesis; lipid IV(A) biosynthesis; lipid IV(A) from (3R)-3-hydroxytetradecanoyl-[acyl-carrier-protein] and UDP-N-acetyl-alpha-D-glucosamine: step 6/6. Transfers the gamma-phosphate of ATP to the 4'-position of a tetraacyldisaccharide 1-phosphate intermediate (termed DS-1-P) to form tetraacyldisaccharide 1,4'-bis-phosphate (lipid IVA). The polypeptide is Tetraacyldisaccharide 4'-kinase (Photobacterium profundum (strain SS9)).